Here is a 477-residue protein sequence, read N- to C-terminus: Bifunctional protein HldE (477 aa).

A ribokinase region spans residues 1-318; the sequence is MKVTLPEFER…ENAVRGRADT (318 aa). 195–198 is an ATP binding site; it reads NLSE. Aspartate 264 is a catalytic residue. Residues 344-477 are cytidylyltransferase; sequence MTNGVFDILH…IKKIQKDSDK (134 aa).

In the N-terminal section; belongs to the carbohydrate kinase PfkB family. This sequence in the C-terminal section; belongs to the cytidylyltransferase family. Homodimer.

It carries out the reaction D-glycero-beta-D-manno-heptose 7-phosphate + ATP = D-glycero-beta-D-manno-heptose 1,7-bisphosphate + ADP + H(+). The catalysed reaction is D-glycero-beta-D-manno-heptose 1-phosphate + ATP + H(+) = ADP-D-glycero-beta-D-manno-heptose + diphosphate. Its pathway is nucleotide-sugar biosynthesis; ADP-L-glycero-beta-D-manno-heptose biosynthesis; ADP-L-glycero-beta-D-manno-heptose from D-glycero-beta-D-manno-heptose 7-phosphate: step 1/4. It participates in nucleotide-sugar biosynthesis; ADP-L-glycero-beta-D-manno-heptose biosynthesis; ADP-L-glycero-beta-D-manno-heptose from D-glycero-beta-D-manno-heptose 7-phosphate: step 3/4. Catalyzes the phosphorylation of D-glycero-D-manno-heptose 7-phosphate at the C-1 position to selectively form D-glycero-beta-D-manno-heptose-1,7-bisphosphate. Functionally, catalyzes the ADP transfer from ATP to D-glycero-beta-D-manno-heptose 1-phosphate, yielding ADP-D-glycero-beta-D-manno-heptose. This Citrobacter koseri (strain ATCC BAA-895 / CDC 4225-83 / SGSC4696) protein is Bifunctional protein HldE.